A 1492-amino-acid chain; its full sequence is Collagen alpha-1(II) chain (1492 aa).

A signal peptide spans 1-26 (MFSFVDSRTLVLFAATQVILLAVVRC). The propeptide at 27 to 186 (QDEEDVLATG…PPGLGGNFAA (160 aa)) is N-terminal propeptide. Residues 36–94 (GSCVQHGQRYSDKDVWKPEPCQICVCDTGNVLCDEIICEDPKDCPNAEIPFGECCPICP) form the VWFC domain. Residues 98-1255 (SSTSSGQGVL…ADQASSSVPQ (1158 aa)) are disordered. Composition is skewed to basic and acidic residues over residues 110-121 (QKGEPGDIKDVV) and 138-159 (PRGD…RDGE). Pro residues predominate over residues 163-178 (PGNPGPVGPPGPPGPP). Positions 197–208 (GGAQMGVMQGPM) are enriched in low complexity. The interval 206–1219 (GPMGPMGPRG…PGPPGPPGPP (1014 aa)) is triple-helical region. The span at 213–222 (PRGPPGPTGA) shows a compositional bias: pro residues. Residues 223–234 (PGPQGFQGNPGE) show a composition bias toward low complexity. Residues 236–245 (GEPGAGGPMG) show a composition bias toward gly residues. Basic and acidic residues predominate over residues 256 to 270 (PGDDGEAGKPGKSGE). Gly residues predominate over residues 311-320 (GAKGEGGATG). Low complexity-rich tracts occupy residues 321-333 (EAGS…PRGL), 340-355 (PGAS…DGLP), 366-376 (PAGAPGFPGAP), and 396-436 (PRGE…AGAP). Positions 438–447 (FPGPRGPPGP) are enriched in pro residues. 2 stretches are compositionally biased toward low complexity: residues 480-490 (SAGPQGAPGPA) and 501-517 (EPGA…RGAP). A compositionally biased stretch (gly residues) spans 539 to 548 (GVPGLGGPKG). 2 stretches are compositionally biased toward low complexity: residues 627–636 (LLGAPGLRGL) and 645–655 (AQGPNGPAGPA). 4-hydroxyproline occurs at positions 664 and 673. Position 675 is a 3-hydroxyproline (P675). 4-hydroxyproline occurs at positions 676 and 679. A compositionally biased stretch (low complexity) spans 711-741 (ERGSSGPQGLQGPRGLPGTPGTDGPKGATGP). A compositionally biased stretch (basic and acidic residues) spans 769–780 (KGDRGDTGEKGP). 2 stretches are compositionally biased toward low complexity: residues 838–850 (AGFA…DGQA) and 894–910 (AQGP…AGRV). P912 bears the 3-hydroxyproline mark. A 4-hydroxyproline mark is found at P913, P919, and P925. A compositionally biased stretch (low complexity) spans 919-930 (PGPSGAPGSAGK). Residues 1010–1019 (GKQGGPGSAG) show a composition bias toward gly residues. The segment covering 1105-1114 (SGPAGARGLP) has biased composition (low complexity). Residues 1120 to 1134 (RGDKGEAGEAGERGQ) show a composition bias toward basic and acidic residues. 2 stretches are compositionally biased toward low complexity: residues 1140–1159 (FTGL…QGAS) and 1176–1186 (PSGKDGSNGLP). A 3-hydroxyproline modification is found at P1149. P1186 is subject to 4-hydroxyproline. P1191 is subject to 3-hydroxyproline. A 4-hydroxyproline modification is found at P1192. Pro residues predominate over residues 1204-1221 (AGPPGQPGPPGPPGPPGP). P1206 bears the 3-hydroxyproline mark. A 4-hydroxyproline mark is found at P1207 and P1210. P1212 is modified (3-hydroxyproline). Residues P1213 and P1216 each carry the 4-hydroxyproline modification. At P1218 the chain carries 3-hydroxyproline. P1219 carries the 4-hydroxyproline modification. The tract at residues 1220–1246 (GPGIDMSAFAGLSQPEKGPDPMRYMRA) is nonhelical region (C-terminal). Positions 1236-1245 (KGPDPMRYMR) are enriched in basic and acidic residues. Positions 1247–1492 (DQASSSVPQR…GVDIGPVCFL (246 aa)) are cleaved as a propeptide — C-terminal propeptide. The 235-residue stretch at 1258–1492 (VDVEATLKSL…GVDIGPVCFL (235 aa)) folds into the Fibrillar collagen NC1 domain. Disulfide bonds link C1288–C1320, C1328–C1490, and C1398–C1443. Ca(2+) is bound by residues D1306, N1308, Q1309, C1311, and D1314. A glycan (N-linked (GlcNAc...) asparagine) is linked at N1393.

This sequence belongs to the fibrillar collagen family. In terms of assembly, homotrimers of alpha 1(II) chains. Post-translationally, contains mostly 4-hydroxyproline. Prolines at the third position of the tripeptide repeating unit (G-X-P) are 4-hydroxylated in some or all of the chains. In terms of processing, contains 3-hydroxyproline at a few sites. This modification occurs on the first proline residue in the sequence motif Gly-Pro-Hyp, where Hyp is 4-hydroxyproline. Lysine residues at the third position of the tripeptide repeating unit (G-X-Y) are 5-hydroxylated in some or all of the chains. Post-translationally, O-glycosylated on hydroxylated lysine residues. The O-linked glycan consists of a Glc-Gal disaccharide.

Its subcellular location is the secreted. The protein localises to the extracellular space. It is found in the extracellular matrix. Functionally, type II collagen is specific for cartilaginous tissues. It is essential for the normal embryonic development of the skeleton, for linear growth and for the ability of cartilage to resist compressive forces. In Xenopus tropicalis (Western clawed frog), this protein is Collagen alpha-1(II) chain.